We begin with the raw amino-acid sequence, 250 residues long: ATP synthase subunit a (250 aa).

5 helical membrane passes run 27 to 47, 83 to 103, 129 to 149, 191 to 211, and 219 to 239; these read TDTV…AFYL, IAPF…ISNW, INYV…AGIW, IFAG…IMWA, and FDLF…ILYF.

This sequence belongs to the ATPase A chain family. In terms of assembly, F-type ATPases have 2 components, CF(1) - the catalytic core - and CF(0) - the membrane proton channel. CF(1) has five subunits: alpha(3), beta(3), gamma(1), delta(1), epsilon(1). CF(0) has three main subunits: a(1), b(2) and c(9-12). The alpha and beta chains form an alternating ring which encloses part of the gamma chain. CF(1) is attached to CF(0) by a central stalk formed by the gamma and epsilon chains, while a peripheral stalk is formed by the delta and b chains.

It is found in the cell membrane. Functionally, key component of the proton channel; it plays a direct role in the translocation of protons across the membrane. The protein is ATP synthase subunit a of Mycobacterium ulcerans (strain Agy99).